Consider the following 131-residue polypeptide: UPF0102 protein YraN (131 aa).

This sequence belongs to the UPF0102 family.

This Salmonella typhi protein is UPF0102 protein YraN.